The sequence spans 146 residues: Deoxyuridine 5'-triphosphate nucleotidohydrolase (146 aa).

Substrate contacts are provided by residues 60–62, asparagine 73, and 77–79; these read RSG and VID.

The protein belongs to the dUTPase family. The cofactor is Mg(2+).

It carries out the reaction dUTP + H2O = dUMP + diphosphate + H(+). It functions in the pathway pyrimidine metabolism; dUMP biosynthesis; dUMP from dCTP (dUTP route): step 2/2. Its function is as follows. This enzyme is involved in nucleotide metabolism: it produces dUMP, the immediate precursor of thymidine nucleotides and it decreases the intracellular concentration of dUTP so that uracil cannot be incorporated into DNA. This is Deoxyuridine 5'-triphosphate nucleotidohydrolase from Tropheryma whipplei (strain TW08/27) (Whipple's bacillus).